The chain runs to 21 residues: Brevinin-1OKb (21 aa).

K21 is modified (lysine amide).

In terms of tissue distribution, expressed by the skin glands.

The protein resides in the secreted. Functionally, antimicrobial peptide. The chain is Brevinin-1OKb from Nidirana okinavana (Kampira Falls frog).